A 249-amino-acid polypeptide reads, in one-letter code: Very-long-chain (3R)-3-hydroxyacyl-CoA dehydratase 1 (249 aa).

Residues 1–22 (MASSEEDGTNGGASEAGEEKEA) are disordered. The Cytoplasmic segment spans residues 1–36 (MASSEEDGTNGGASEAGEEKEAPGRRRRLGLLATVW). The chain crosses the membrane as a helical span at residues 37–56 (LTFYNIAMTAGWLVLAIAMV). At 57–75 (RFYMEKGTHKGLYKSIQKT) the chain is on the lumenal side. Residues 76 to 92 (LKFFQTFALLEIVHCLI) form a helical membrane-spanning segment. At 93–102 (GIVPTSVIVA) the chain is on the cytoplasmic side. A helical transmembrane segment spans residues 103–120 (GVQVSSRIFMVWLITHSI). The Lumenal portion of the chain corresponds to 121-126 (KPIQNE). The helical transmembrane segment at 127–141 (ESVVLFLVAWTVTEI) threads the bilayer. Topologically, residues 142–164 (TRYSFYTFSLLDHLPYFIKWARY) are cytoplasmic. Residues 165–182 (NFFIILYPVGVVGELLTI) form a helical membrane-spanning segment. Residues Y171 and E178 contribute to the active site. Over 183-212 (YAALPYVKKTGMFSIRLPNKYNVSFDYYYF) the chain is Lumenal. Residue N204 is glycosylated (N-linked (GlcNAc...) asparagine). The chain crosses the membrane as a helical span at residues 213-230 (LLITMASYIPLFPQLYFH). The Cytoplasmic segment spans residues 231–249 (MLRQRRKVLHGEVIVEKDD).

This sequence belongs to the very long-chain fatty acids dehydratase HACD family. In terms of assembly, may interact with enzymes of the ELO family (including ELOVL1); with those enzymes that mediate condensation, the first of the four steps of the reaction cycle responsible for fatty acids elongation, may be part of a larger fatty acids elongase complex. Interacts with TECR. In terms of tissue distribution, skeletal muscle.

The protein resides in the endoplasmic reticulum membrane. The enzyme catalyses a very-long-chain (3R)-3-hydroxyacyl-CoA = a very-long-chain (2E)-enoyl-CoA + H2O. It catalyses the reaction (3R)-hydroxyhexadecanoyl-CoA = (2E)-hexadecenoyl-CoA + H2O. It carries out the reaction (3R)-hydroxyoctadecanoyl-CoA = (2E)-octadecenoyl-CoA + H2O. The catalysed reaction is (3R)-hydroxyeicosanoyl-CoA = (2E)-eicosenoyl-CoA + H2O. The enzyme catalyses (3R)-hydroxydocosanoyl-CoA = (2E)-docosenoyl-CoA + H2O. It catalyses the reaction (3R)-hydroxytetracosanoyl-CoA = (2E)-tetracosenoyl-CoA + H2O. It carries out the reaction (3R)-hydroxyhexacosanoyl-CoA = (2E)-hexacosenoyl-CoA + H2O. The protein operates within lipid metabolism; fatty acid biosynthesis. In terms of biological role, catalyzes the third of the four reactions of the long-chain fatty acids elongation cycle. This endoplasmic reticulum-bound enzymatic process, allows the addition of two carbons to the chain of long- and very long-chain fatty acids/VLCFAs per cycle. This enzyme catalyzes the dehydration of the 3-hydroxyacyl-CoA intermediate into trans-2,3-enoyl-CoA, within each cycle of fatty acid elongation. Thereby, it participates in the production of VLCFAs of different chain lengths that are involved in multiple biological processes as precursors of membrane lipids and lipid mediators. This chain is Very-long-chain (3R)-3-hydroxyacyl-CoA dehydratase 1 (HACD1), found in Canis lupus familiaris (Dog).